The following is a 609-amino-acid chain: Glutamine--fructose-6-phosphate aminotransferase [isomerizing] (609 aa).

Cys2 acts as the Nucleophile; for GATase activity in catalysis. Residues 2–218 (CGIVGAIAQR…EGDIAEITRR (217 aa)) enclose the Glutamine amidotransferase type-2 domain. SIS domains follow at residues 286 to 426 (ADEL…LKGL) and 458 to 599 (LAED…VDQP). Lys604 (for Fru-6P isomerization activity) is an active-site residue.

As to quaternary structure, homodimer.

Its subcellular location is the cytoplasm. It catalyses the reaction D-fructose 6-phosphate + L-glutamine = D-glucosamine 6-phosphate + L-glutamate. Catalyzes the first step in hexosamine metabolism, converting fructose-6P into glucosamine-6P using glutamine as a nitrogen source. The protein is Glutamine--fructose-6-phosphate aminotransferase [isomerizing] of Shigella flexneri.